A 725-amino-acid chain; its full sequence is Eukaryotic elongation factor 2 kinase (725 aa).

Residues 1 to 12 (MADEDLIFRLEG) show a composition bias toward basic and acidic residues. The tract at residues 1–38 (MADEDLIFRLEGVDGGQSPRAGHDGDSDGDSDDEEGYF) is disordered. Residue alanine 2 is modified to N-acetylalanine. Phosphoserine is present on residues serine 18 and serine 27. The segment covering 27 to 36 (SDGDSDDEEG) has biased composition (acidic residues). A phosphoserine; by autocatalysis mark is found at serine 61 and serine 66. Serine 70, serine 71, serine 72, and serine 74 each carry phosphoserine. Serine 78 is modified (phosphoserine; by autocatalysis and TRPM7). The calmodulin-binding stretch occupies residues 81-94 (FKEAWKHAIQKAKH). An Alpha-type protein kinase domain is found at 116 to 326 (RYNAVTGEWL…ICESMGLAPF (211 aa)). Position 243 is a phosphoserine (serine 243). 296–302 (GDGNLGV) is an ATP binding site. Threonine 348 and threonine 353 each carry phosphothreonine; by autocatalysis. Disordered stretches follow at residues 352-405 (GTEE…PHSQ) and 423-477 (SRDH…SLGS). Serine 359 is modified (phosphoserine; by MAPK13 and CDK1). Positions 363–377 (RTLSGSRPPLLRPLS) are enriched in low complexity. Phosphoserine; by autocatalysis, RPS6KA1 and RPS6KB1 is present on serine 366. Positions 386-404 (SDVTFDSLPSSPSSATPHS) are enriched in polar residues. A Phosphoserine modification is found at serine 392. A Phosphoserine; by AMPK modification is found at serine 398. 2 stretches are compositionally biased toward basic and acidic residues: residues 423 to 436 (SRDHDHLDNHRESE) and 445 to 469 (SEKRGELDDPEPREHGHSYSNRKYE). Serine 435 bears the Phosphoserine mark. Serine 445 carries the post-translational modification Phosphoserine; by autocatalysis. Serine 470 is subject to Phosphoserine. The residue at position 474 (serine 474) is a Phosphoserine; by autocatalysis. A Phosphoserine modification is found at serine 477. Residue serine 491 is modified to Phosphoserine; by autocatalysis. A Phosphoserine; by PKA modification is found at serine 500.

The protein belongs to the protein kinase superfamily. Alpha-type protein kinase family. As to quaternary structure, monomer or homodimer. Interacts with Calmodulin/CALM1; this interaction is strictly required for phosphorylation activity. Autophosphorylated at multiple residues, Thr-348 being the major site. Phosphorylated by AMP-activated protein kinase AMPK at Ser-398 leading to EEF2K activation and protein synthesis inhibition. Phosphorylated by TRPM7 at Ser-78 resulting in improved protein stability, higher EE2F phosphorylated and subsequently reduced rate of protein synthesis. Phosphorylation by other kinases such as CDK1 and MAPK13 at Ser-359 or RPS6KA1 and RPS6KB1 at Ser-366 instead decrease EEF2K activity and promote protein synthesis.

The enzyme catalyses [translation elongation factor 2] + ATP = [translation elongation factor 2]-phosphate + ADP + H(+). With respect to regulation, undergoes calcium/calmodulin-dependent intramolecular autophosphorylation, and this results in it becoming partially calcium/calmodulin-independent. Threonine kinase that regulates protein synthesis by controlling the rate of peptide chain elongation. Upon activation by a variety of upstream kinases including AMPK or TRPM7, phosphorylates the elongation factor EEF2 at a single site, renders it unable to bind ribosomes and thus inactive. In turn, the rate of protein synthesis is reduced. In Homo sapiens (Human), this protein is Eukaryotic elongation factor 2 kinase (EEF2K).